We begin with the raw amino-acid sequence, 1286 residues long: CLIP-associating protein 2 (1286 aa).

A golgi localization region spans residues 1-40 (MRRLICKRICDYKSFDDEESVDGNRPSSAASAFKVPAPKT). Residues Ser14 and Ser20 each carry the phosphoserine modification. The interval 17–67 (DEESVDGNRPSSAASAFKVPAPKTPGNPVSSARKPGSAGGPKVGGPSKEGG) is disordered. Gly residues predominate over residues 53 to 67 (SAGGPKVGGPSKEGG). Residues 66 to 317 (GGAGAVDEDD…KSLQTYLKSS (252 aa)) form a TOG 1 region. HEAT repeat units lie at residues 179–214 (HGAEAIVPTLFNLVPNSAKVMATSGCAAIRFIIRHT), 215–251 (HVPRLIPLITSNCTSKSVPVRRRSFEFLDLLLQEWQT), and 256–293 (RHAAVLVETIKKGIHDADAEARVEARKTYMGLRNHFPG). The segment at 320–374 (VASLPQSDRSSSSSQESLNRPFSSKWSTANPSTVAGRVSVGGSKANPLPGSLQRS) is disordered. Phosphoserine occurs at positions 322, 333, and 336. Residues 322-340 (SLPQSDRSSSSSQESLNRP) are compositionally biased toward low complexity. Polar residues predominate over residues 341–352 (FSSKWSTANPST). Phosphoserine occurs at positions 374, 376, and 413. The tract at residues 411–473 (YASLEDTSDK…GSRSGSPGRV (63 aa)) is disordered. The segment covering 417 to 431 (TSDKMDGTASDDGRV) has biased composition (basic and acidic residues). Residues 450–565 (RGRSRTKMVS…GPGYGISQSS (116 aa)) are interaction with microtubules, MAPRE1 and MAPRE3. Residues 459-473 (SQSQPGSRSGSPGRV) show a composition bias toward low complexity. 5 positions are modified to phosphoserine: Ser461, Ser465, Ser469, Ser484, and Ser495. The interval 493-564 (SASAQKRSKI…LGPGYGISQS (72 aa)) is disordered. The SXIP motif 1; mediates interaction with MAPRE1 and targeting to microtubule plus ends signature appears at 500 to 503 (SKIP). Ser513 carries the phosphoserine modification. Positions 523–526 (SRIP) match the SXIP motif 2; mediates interaction with MAPRE1 and targeting to microtubule plus ends motif. Ser531, Ser535, Ser570, Ser572, Ser581, Ser614, and Ser620 each carry phosphoserine. Over residues 605–616 (RRYESYGMHSDD) the composition is skewed to basic and acidic residues. Residues 605–638 (RRYESYGMHSDDDANSDASSACSERSYSSRNGSI) are disordered. The span at 620–634 (SDASSACSERSYSSR) shows a compositional bias: low complexity. Residues 642-873 (MRQTEDVAEV…TKLLHNHLRN (232 aa)) are TOG 2. HEAT repeat units lie at residues 702–739 (KVFSMFLETLVDFIQVHKDDLQDWLFVLLTQLLKKMGA) and 764–801 (LQFNILMRFTVDQTQTPSLKVKVAILKYIETLAKQMDP). At Thr779 the chain carries Phosphothreonine. Residues 864-1286 (TKLLHNHLRN…DPTADVSGQS (423 aa)) are interaction with RSN and localization to the Golgi and kinetochores. Disordered regions lie at residues 870-920 (HLRN…FDYD) and 944-989 (SFRS…SQPA). Composition is skewed to polar residues over residues 872-884 (RNTGNGTQSSMGS) and 893-914 (SPANWSSPLTSPTNTSQNTLSP). Phosphoserine is present on Ser884. A phosphoserine mark is found at Ser944, Ser947, Ser1005, and Ser1021. Residues 947–964 (SQEDMSEPVRRDPKKEDG) show a composition bias toward basic and acidic residues. Positions 1009-1286 (RDYNPYNYSD…DPTADVSGQS (278 aa)) are required for cortical localization. 3 HEAT repeats span residues 1046–1083 (LDHSDLVAELLKELSNHNERIEERKIALYELMKLTQEE), 1090–1127 (EHFKTILLLLLETLGDKEPTIRALALKVLKEILRHQPA), and 1208–1245 (MLLPEIMPGLIQGYDNSESSVRKACVFCLVAVHAVIGD).

This sequence belongs to the CLASP family. Interacts with microtubules. Interacts with MAPRE1; probably required for targeting to growing microtubule plus ends. Interacts with ERC1, MAPRE3 and PHLDB2. The interaction with ERC1 may be mediated by PHLDB2. Interacts with GCC2; recruits CLASP2 to Golgi membranes. Interacts with CLIP2 and RSN. Interacts with MACF1. Interacts with mtcl2. Interacts with MTCL1. Phosphorylated by GSK3B. Phosphorylation by GSK3B may negatively regulate binding to microtubule lattices in lamella. Isoform 2 is phosphorylated on Ser-241. As to expression, highly expressed in brain and at low levels in heart, kidney and lung.

The protein resides in the cytoplasm. Its subcellular location is the cytoskeleton. It localises to the microtubule organizing center. It is found in the centrosome. The protein localises to the chromosome. The protein resides in the centromere. Its subcellular location is the kinetochore. It localises to the spindle. It is found in the spindle pole. The protein localises to the golgi apparatus. The protein resides in the trans-Golgi network. Its subcellular location is the cell membrane. It localises to the cell projection. It is found in the ruffle membrane. The protein localises to the cell cortex. Its function is as follows. Microtubule plus-end tracking protein that promotes the stabilization of dynamic microtubules. Involved in the nucleation of noncentrosomal microtubules originating from the trans-Golgi network (TGN). Required for the polarization of the cytoplasmic microtubule arrays in migrating cells towards the leading edge of the cell. May act at the cell cortex to enhance the frequency of rescue of depolymerizing microtubules by attaching their plus-ends to cortical platforms composed of ERC1 and PHLDB2. This cortical microtubule stabilizing activity is regulated at least in part by phosphatidylinositol 3-kinase signaling. Also performs a similar stabilizing function at the kinetochore which is essential for the bipolar alignment of chromosomes on the mitotic spindle. Acts as a mediator of ERBB2-dependent stabilization of microtubules at the cell cortex. This Mus musculus (Mouse) protein is CLIP-associating protein 2 (Clasp2).